The chain runs to 208 residues: Uracil phosphoribosyltransferase (208 aa).

5-phospho-alpha-D-ribose 1-diphosphate contacts are provided by residues Arg78, Arg103, and 130 to 138; that span reads DPMLATGGS. Residues Ile193 and 198 to 200 each bind uracil; that span reads GDA. Asp199 serves as a coordination point for 5-phospho-alpha-D-ribose 1-diphosphate.

Belongs to the UPRTase family. It depends on Mg(2+) as a cofactor.

The catalysed reaction is UMP + diphosphate = 5-phospho-alpha-D-ribose 1-diphosphate + uracil. The protein operates within pyrimidine metabolism; UMP biosynthesis via salvage pathway; UMP from uracil: step 1/1. Allosterically activated by GTP. Its function is as follows. Catalyzes the conversion of uracil and 5-phospho-alpha-D-ribose 1-diphosphate (PRPP) to UMP and diphosphate. The polypeptide is Uracil phosphoribosyltransferase (Shewanella amazonensis (strain ATCC BAA-1098 / SB2B)).